A 321-amino-acid polypeptide reads, in one-letter code: Probable pectate lyase A (321 aa).

The first 18 residues, 1-18, serve as a signal peptide directing secretion; it reads MKFVATLIACGLSGLALA. N-linked (GlcNAc...) asparagine glycosylation occurs at Asn93. Positions 134, 163, and 167 each coordinate Ca(2+). Arg220 is an active-site residue. N-linked (GlcNAc...) asparagine glycosylation occurs at Asn238.

It belongs to the polysaccharide lyase 1 family. Ca(2+) serves as cofactor.

The protein resides in the secreted. The catalysed reaction is Eliminative cleavage of (1-&gt;4)-alpha-D-galacturonan to give oligosaccharides with 4-deoxy-alpha-D-galact-4-enuronosyl groups at their non-reducing ends.. In terms of biological role, pectinolytic enzyme consist of four classes of enzymes: pectin lyase, polygalacturonase, pectin methylesterase and rhamnogalacturonase. Among pectinolytic enzymes, pectin lyase is the most important in depolymerization of pectin, since it cleaves internal glycosidic bonds of highly methylated pectins. Favors pectate, the anion, over pectin, the methyl ester. The sequence is that of Probable pectate lyase A (plyA) from Aspergillus fumigatus (strain CBS 144.89 / FGSC A1163 / CEA10) (Neosartorya fumigata).